Here is a 180-residue protein sequence, read N- to C-terminus: Pyruvate synthase subunit PorC (180 aa).

As to quaternary structure, heterotetramer of one alpha, one beta, one delta and one gamma chain.

The catalysed reaction is 2 oxidized [2Fe-2S]-[ferredoxin] + pyruvate + CoA = 2 reduced [2Fe-2S]-[ferredoxin] + acetyl-CoA + CO2 + H(+). The polypeptide is Pyruvate synthase subunit PorC (porC) (Methanothermobacter thermautotrophicus (strain ATCC 29096 / DSM 1053 / JCM 10044 / NBRC 100330 / Delta H) (Methanobacterium thermoautotrophicum)).